The sequence spans 201 residues: Acireductone dioxygenase 2 (201 aa).

4 residues coordinate Fe(2+): histidine 83, histidine 85, glutamate 89, and histidine 129. Residues histidine 83, histidine 85, glutamate 89, and histidine 129 each coordinate Ni(2+).

Belongs to the acireductone dioxygenase (ARD) family. Fe(2+) is required as a cofactor. It depends on Ni(2+) as a cofactor.

Its subcellular location is the cytoplasm. It is found in the nucleus. The enzyme catalyses 1,2-dihydroxy-5-(methylsulfanyl)pent-1-en-3-one + O2 = 4-methylsulfanyl-2-oxobutanoate + formate + 2 H(+). It carries out the reaction 1,2-dihydroxy-5-(methylsulfanyl)pent-1-en-3-one + O2 = 3-(methylsulfanyl)propanoate + CO + formate + 2 H(+). It participates in amino-acid biosynthesis; L-methionine biosynthesis via salvage pathway; L-methionine from S-methyl-5-thio-alpha-D-ribose 1-phosphate: step 5/6. Functionally, catalyzes 2 different reactions between oxygen and the acireductone 1,2-dihydroxy-3-keto-5-methylthiopentene (DHK-MTPene) depending upon the metal bound in the active site. Fe-containing acireductone dioxygenase (Fe-ARD) produces formate and 2-keto-4-methylthiobutyrate (KMTB), the alpha-ketoacid precursor of methionine in the methionine recycle pathway. Ni-containing acireductone dioxygenase (Ni-ARD) produces methylthiopropionate, carbon monoxide and formate, and does not lie on the methionine recycle pathway. The sequence is that of Acireductone dioxygenase 2 from Coprinopsis cinerea (strain Okayama-7 / 130 / ATCC MYA-4618 / FGSC 9003) (Inky cap fungus).